The primary structure comprises 292 residues: 4-hydroxy-tetrahydrodipicolinate synthase (292 aa).

T50 contributes to the pyruvate binding site. Y139 functions as the Proton donor/acceptor in the catalytic mechanism. K167 (schiff-base intermediate with substrate) is an active-site residue. Residue I208 coordinates pyruvate.

This sequence belongs to the DapA family. As to quaternary structure, homotetramer; dimer of dimers.

Its subcellular location is the cytoplasm. The enzyme catalyses L-aspartate 4-semialdehyde + pyruvate = (2S,4S)-4-hydroxy-2,3,4,5-tetrahydrodipicolinate + H2O + H(+). The protein operates within amino-acid biosynthesis; L-lysine biosynthesis via DAP pathway; (S)-tetrahydrodipicolinate from L-aspartate: step 3/4. Functionally, catalyzes the condensation of (S)-aspartate-beta-semialdehyde [(S)-ASA] and pyruvate to 4-hydroxy-tetrahydrodipicolinate (HTPA). This is 4-hydroxy-tetrahydrodipicolinate synthase from Oenococcus oeni (strain ATCC BAA-331 / PSU-1).